The sequence spans 182 residues: Negative transcriptional regulator PadR (182 aa).

Belongs to the PadR family. In terms of assembly, homodimer.

It is found in the cytoplasm. Its activity is regulated as follows. PadR repressor activity is inhibited in the presence of phenolic acids, which directly modulate PadR binding to the promoter of padC, leading to the dissociation of PadR from the operator DNA and expression of padC. In the presence of MgCl(2), binding is not altered by phenolic acids. Its function is as follows. Transcriptional regulator involved in the regulation of the metabolism of phenolic acids. In the absence of phenolic acids, represses the expression of padC, which encodes a phenolic acid decarboxylase (PAD) involved in the detoxification of harmful phenolic acids. Acts by binding to the padC promoter region, preventing the transcription of the gene. This is Negative transcriptional regulator PadR from Bacillus subtilis (strain 168).